A 38-amino-acid chain; its full sequence is Large ribosomal subunit protein bL36 (38 aa).

It belongs to the bacterial ribosomal protein bL36 family.

The sequence is that of Large ribosomal subunit protein bL36 from Baumannia cicadellinicola subsp. Homalodisca coagulata.